The following is a 203-amino-acid chain: Selenocysteine-containing peroxiredoxin PrxU (203 aa).

One can recognise a Thioredoxin domain in the interval 2-160; the sequence is VSVGKKAPDF…TLRQIQAFQL (159 aa). Selenocysteine 47 is a catalytic residue. A non-standard amino acid (selenocysteine) is located at residue selenocysteine 47.

This sequence belongs to the peroxiredoxin family. AhpC/Prx1 subfamily.

The catalysed reaction is a hydroperoxide + [thioredoxin]-dithiol = an alcohol + [thioredoxin]-disulfide + H2O. Its function is as follows. Thiol-specific peroxidase that catalyzes the reduction of hydrogen peroxide and organic hydroperoxides to water and alcohols, respectively. Plays a role in cell protection against oxidative stress by detoxifying peroxides. This is Selenocysteine-containing peroxiredoxin PrxU from Peptoclostridium acidaminophilum (Eubacterium acidaminophilum).